A 449-amino-acid polypeptide reads, in one-letter code: UNC93-like protein MFSD11 (449 aa).

Residues 8–28 (LFNIIILGVAFMFMFTAFQTC) traverse the membrane as a helical segment. Residue Asn-40 is glycosylated (N-linked (GlcNAc...) asparagine). A run of 5 helical transmembrane segments spans residues 53 to 73 (AIIY…VAIV), 74 to 94 (GPQL…AVFN), 96 to 116 (PFPW…AVLW), 138 to 158 (IFWA…YFAW), and 170 to 190 (RTVF…FFLI). Ser-204 carries the phosphoserine modification. A run of 6 helical transmembrane segments spans residues 239-259 (MLLL…FSGV), 277-297 (LIGL…SLFG), 309-329 (PVVL…FLNM), 359-379 (FLLG…LGFL), 385-405 (APAF…AFFY), and 410-430 (LLHW…LSFF).

Belongs to the unc-93 family.

The protein resides in the membrane. The polypeptide is UNC93-like protein MFSD11 (MFSD11) (Pongo abelii (Sumatran orangutan)).